Reading from the N-terminus, the 275-residue chain is Shikimate dehydrogenase (NADP(+)) (275 aa).

Shikimate contacts are provided by residues 19–21 (SIS) and Thr-66. Lys-70 acts as the Proton acceptor in catalysis. Asn-91 and Asp-106 together coordinate shikimate. Residues 129–133 (GAGGA), 153–158 (NRTYGR), and Ile-219 contribute to the NADP(+) site. Position 221 (Tyr-221) interacts with shikimate. Position 242 (Gly-242) interacts with NADP(+).

It belongs to the shikimate dehydrogenase family. In terms of assembly, homodimer.

The enzyme catalyses shikimate + NADP(+) = 3-dehydroshikimate + NADPH + H(+). Its pathway is metabolic intermediate biosynthesis; chorismate biosynthesis; chorismate from D-erythrose 4-phosphate and phosphoenolpyruvate: step 4/7. In terms of biological role, involved in the biosynthesis of the chorismate, which leads to the biosynthesis of aromatic amino acids. Catalyzes the reversible NADPH linked reduction of 3-dehydroshikimate (DHSA) to yield shikimate (SA). This chain is Shikimate dehydrogenase (NADP(+)), found in Dictyoglomus thermophilum (strain ATCC 35947 / DSM 3960 / H-6-12).